Reading from the N-terminus, the 1153-residue chain is PPi-type phosphoenolpyruvate carboxykinase 3 (1153 aa).

Residues 1085 to 1131 (RQKLEVAKLNKDLAYLNKTIAEKPRLAETLNKQIAAVKEELQYVSSE) are a coiled coil.

Belongs to the PPi-type phosphoenolpyruvate carboxykinase family. As to quaternary structure, monomer and trimer; forms heterotrimers with PEPCK1 and PEPCK2.

It localises to the cytoplasm. Its subcellular location is the cytosol. It carries out the reaction oxaloacetate + diphosphate = phosphoenolpyruvate + phosphate + CO2. Inorganic pyrophosphate (PPi)-dependent phosphoenolpyruvate carboxykinase, which regulates the carbon flow of the central metabolism by fixing CO(2) to phosphoenolpyruvate to produce oxaloacetate. Can also produce pyruvate and diphosphate from phosphoenolpyruvate and phosphate. This is PPi-type phosphoenolpyruvate carboxykinase 3 from Entamoeba histolytica (strain ATCC 30459 / HM-1:IMSS / ABRM).